Here is a 723-residue protein sequence, read N- to C-terminus: MSAISLIQPDRDLFSWPQYWAACFGPAPFLPMSRDEMDQLGWDSCDIILVTGDAYVDHPSFGMAICGRMLEAQGFRVGIIAQPDWNSKDDFMRLGKPNLFFGVTAGNMDSMINRYTADRKLRHDDAYTPDNVAGKRPDRATLVYTQRCKEAWKDVPVILGGIEASLRRTAHYDYWSDTVRRSVLVDSKADMLMFGNGERPLVEVAHRLAMGETIDQIRDVRNTAIMVKEALPGWSGVDSTRLDTPGKIDPIPHPYGEDLPCADNKPVAPKKQEAKAITVQPPRPKPWEKTYILLPSFEKVKGDKVLYAHASRILHHETNPGCARALMQKHGDRYVWINPPAIPLSTEEMDSVFALPYQRVPHPAYGNARIPAYEMIRFSINIMRGCFGGCSFCSITEHEGRIIQSRSEDSIINEIEAIRDTVPGFTGVISDLGGPTANMYMLRCKSPRAEQTCRRLSCVYPDICPHMDTDHTPTINLYRRARELKGIKKILIASGVRYDIAVEDPRYIKELASHHVGGYLKIAPEHTEEGPLSKMMKPGMGSYDRFKELFDLYSKQAGKEQYLIPYFISAHPGTRDEDMVNLALWLKRHRFRLDQVQNFYPSPLANSTTMYYTGKNPLGKIGYKSEDVVVPKGDRQRRLHKALLRYHDPANWPLIRQALEAMGKKHLIGGRRECLVPAPTIEEMREARRQNRNTRPALTKHTPVEHQRQGLAANKKRGKGAGR.

The 279-residue stretch at Ala-372–Ala-650 folds into the Radical SAM core domain. [4Fe-4S] cluster-binding residues include Cys-386, Cys-390, and Cys-393. The tract at residues Glu-686–Arg-723 is disordered. Basic residues predominate over residues Asn-714–Arg-723.

It belongs to the UPF0313 family. [4Fe-4S] cluster is required as a cofactor.

This Salmonella typhimurium (strain LT2 / SGSC1412 / ATCC 700720) protein is UPF0313 protein YgiQ.